The chain runs to 441 residues: Tol-Pal system protein TolB (441 aa).

Positions 1-39 are cleaved as a signal peptide; the sequence is MPTMTPAFSRASLSEALRSYGLALLLFLATLLAWQPAHA.

Belongs to the TolB family. As to quaternary structure, the Tol-Pal system is composed of five core proteins: the inner membrane proteins TolA, TolQ and TolR, the periplasmic protein TolB and the outer membrane protein Pal. They form a network linking the inner and outer membranes and the peptidoglycan layer.

It is found in the periplasm. Part of the Tol-Pal system, which plays a role in outer membrane invagination during cell division and is important for maintaining outer membrane integrity. This chain is Tol-Pal system protein TolB, found in Bordetella avium (strain 197N).